A 305-amino-acid polypeptide reads, in one-letter code: MPELPEVETVRRTLCPRVVGRRIRRVEILTPRQIYHPDPATFAADLEGAVFDDIERRGKYLLFRLGPRILVAHLRMSGHLYVCGPEAPRPRHLHVVFHLDDGGELRYADQRKFGGFHLLGPGGEGMPPGLANLGPEPLSPEFTPQVLAERLAGRHTSIKAALLNQALVAGLGNIYADEALFCARIHPAREAGSLTPAEVERLHGCIRRVLLRAVERRGTTFSLYRDGEGNEGDMYDELQVFDRAGEPCPVCGTPIRKVAVAQRGTHFCPRCQPVPEGVALSPRRARPGRRGNSVRVAAEPPGTYE.

The active-site Schiff-base intermediate with DNA is the proline 2. Glutamate 3 serves as the catalytic Proton donor. The active-site Proton donor; for beta-elimination activity is the lysine 59. DNA is bound by residues histidine 92, arginine 111, and arginine 154. The FPG-type zinc-finger motif lies at 239–273; sequence QVFDRAGEPCPVCGTPIRKVAVAQRGTHFCPRCQP. Residue arginine 263 is the Proton donor; for delta-elimination activity of the active site. Residues 282 to 305 form a disordered region; that stretch reads PRRARPGRRGNSVRVAAEPPGTYE.

Belongs to the FPG family. In terms of assembly, monomer. Zn(2+) is required as a cofactor.

It catalyses the reaction Hydrolysis of DNA containing ring-opened 7-methylguanine residues, releasing 2,6-diamino-4-hydroxy-5-(N-methyl)formamidopyrimidine.. The enzyme catalyses 2'-deoxyribonucleotide-(2'-deoxyribose 5'-phosphate)-2'-deoxyribonucleotide-DNA = a 3'-end 2'-deoxyribonucleotide-(2,3-dehydro-2,3-deoxyribose 5'-phosphate)-DNA + a 5'-end 5'-phospho-2'-deoxyribonucleoside-DNA + H(+). In terms of biological role, involved in base excision repair of DNA damaged by oxidation or by mutagenic agents. Acts as a DNA glycosylase that recognizes and removes damaged bases. Has a preference for oxidized purines, such as 7,8-dihydro-8-oxoguanine (8-oxoG). Has AP (apurinic/apyrimidinic) lyase activity and introduces nicks in the DNA strand. Cleaves the DNA backbone by beta-delta elimination to generate a single-strand break at the site of the removed base with both 3'- and 5'-phosphates. The polypeptide is Formamidopyrimidine-DNA glycosylase (Symbiobacterium thermophilum (strain DSM 24528 / JCM 14929 / IAM 14863 / T)).